Consider the following 137-residue polypeptide: Gonadotropin subunit beta-1 (137 aa).

The signal sequence occupies residues 1 to 24; it reads MYCTHLMTLQLVVMAMLWVTPVRA. 5 disulfides stabilise this stretch: Cys32-Cys78, Cys46-Cys93, Cys55-Cys108, Cys59-Cys110, and Cys113-Cys120. Asn36 carries an N-linked (GlcNAc...) asparagine glycan.

The protein belongs to the glycoprotein hormones subunit beta family. As to quaternary structure, heterodimer of an alpha and a beta chain.

It is found in the secreted. Functionally, involved in gametogenesis and steroidogenesis. The polypeptide is Gonadotropin subunit beta-1 (cgba) (Oncorhynchus keta (Chum salmon)).